Consider the following 138-residue polypeptide: Host cell factor C1 regulator 1 (138 aa).

The tract at residues 76–79 (DHPY) is interaction with HCFC1. The short motif at 110–119 (IPEALRLLRL) is the Nuclear export signal element.

Interacts with HCFC1. As to expression, widely expressed.

It is found in the cytoplasm. It localises to the nucleus. Its function is as follows. Regulates HCFC1 activity by modulating its subcellular localization. Overexpression of HCFC1R1 leads to accumulation of HCFC1 in the cytoplasm. HCFC1R1-mediated export may provide the pool of cytoplasmic HCFC1 required for import of virion-derived VP16 into the nucleus. This is Host cell factor C1 regulator 1 (HCFC1R1) from Homo sapiens (Human).